We begin with the raw amino-acid sequence, 358 residues long: Peptide chain release factor 1 (358 aa).

Position 233 is an N5-methylglutamine (Gln-233).

This sequence belongs to the prokaryotic/mitochondrial release factor family. Post-translationally, methylated by PrmC. Methylation increases the termination efficiency of RF1.

The protein localises to the cytoplasm. In terms of biological role, peptide chain release factor 1 directs the termination of translation in response to the peptide chain termination codons UAG and UAA. The sequence is that of Peptide chain release factor 1 from Staphylococcus aureus (strain MRSA252).